Reading from the N-terminus, the 704-residue chain is Urea-proton symporter DUR3 (704 aa).

Transmembrane regions (helical) follow at residues 39–59 (YAVI…LVWL), 80–100 (VKTG…ATIL), 115–135 (FWYA…AIEI), 159–179 (IVFL…LLLG), 192–212 (LYAA…AGGL), 216–236 (FLAS…FVFL), 291–311 (SSGG…TVFV), 336–356 (LVWF…ALAL), 388–408 (LTML…AVSS), 435–455 (AVLG…KAGV), 461–481 (YLAM…MLLW), 486–506 (AFGA…TWLT), 527–547 (LAGN…CSLV), 590–610 (AWIV…WPVL), and 622–642 (FWFW…VIIG).

Belongs to the sodium:solute symporter (SSF) (TC 2.A.21) family. Expressed in root rhizodermis, including root hairs and cortex in more basal root zones. Expressed in shoots.

It localises to the cell membrane. In terms of biological role, high-affinity urea-proton symporter involved in the active transport of urea across the plasma membrane into root cells. May play an important role in urea uptake by plant cells at low external urea concentrations. In Arabidopsis thaliana (Mouse-ear cress), this protein is Urea-proton symporter DUR3 (DUR3).